The sequence spans 261 residues: Small ribosomal subunit protein uS2 (261 aa).

A disordered region spans residues 224 to 261 (GRQGEDDEAVQQEEVAEGVSKDSLEDLKKTVEEGSNEE). Residues 228–239 (EDDEAVQQEEVA) show a composition bias toward acidic residues. Over residues 242-255 (VSKDSLEDLKKTVE) the composition is skewed to basic and acidic residues.

It belongs to the universal ribosomal protein uS2 family.

The protein is Small ribosomal subunit protein uS2 (rpsB) of Pediococcus acidilactici.